The sequence spans 144 residues: Putative pre-16S rRNA nuclease (144 aa).

Belongs to the YqgF nuclease family.

It is found in the cytoplasm. In terms of biological role, could be a nuclease involved in processing of the 5'-end of pre-16S rRNA. This Mycoplasma mobile (strain ATCC 43663 / 163K / NCTC 11711) (Mesomycoplasma mobile) protein is Putative pre-16S rRNA nuclease.